The sequence spans 473 residues: Trehalose-6-phosphate synthase (473 aa).

R10 is a binding site for D-glucose 6-phosphate. 21 to 22 (GG) contributes to the UDP-alpha-D-glucose binding site. Y76 and D130 together coordinate D-glucose 6-phosphate. UDP-alpha-D-glucose-binding residues include R262 and K267. R300 is a D-glucose 6-phosphate binding site. UDP-alpha-D-glucose contacts are provided by residues F339 and 365-369 (LVAKE). The tract at residues 454 to 473 (TPRSPERQQQNNVATFPKLA) is disordered.

Belongs to the glycosyltransferase 20 family. In terms of assembly, homotetramer.

The enzyme catalyses D-glucose 6-phosphate + UDP-alpha-D-glucose = alpha,alpha-trehalose 6-phosphate + UDP + H(+). It participates in glycan biosynthesis; trehalose biosynthesis. Probably involved in the osmoprotection via the biosynthesis of trehalose. Catalyzes the transfer of glucose from UDP-alpha-D-glucose (UDP-Glc) to D-glucose 6-phosphate (Glc-6-P) to form trehalose-6-phosphate. Acts with retention of the anomeric configuration of the UDP-sugar donor. The sequence is that of Trehalose-6-phosphate synthase from Salmonella paratyphi A (strain ATCC 9150 / SARB42).